The primary structure comprises 101 residues: RNA-binding protein Hfq (101 aa).

The region spanning 9 to 68 (DPFLNALRRERVPVSIYLVNGIKLQGQIESFDQFVILLKNTVSQMVYKHAISTVVPSRPV) is the Sm domain. The tract at residues 63–101 (VPSRPVSHHNNNPSGGSSNYHHGSTPASQPSQPESDDAE) is disordered. Over residues 70–86 (HHNNNPSGGSSNYHHGS) the composition is skewed to low complexity.

It belongs to the Hfq family. In terms of assembly, homohexamer.

Functionally, RNA chaperone that binds small regulatory RNA (sRNAs) and mRNAs to facilitate mRNA translational regulation in response to envelope stress, environmental stress and changes in metabolite concentrations. Also binds with high specificity to tRNAs. This Sodalis glossinidius (strain morsitans) protein is RNA-binding protein Hfq.